Reading from the N-terminus, the 162-residue chain is NADH-quinone oxidoreductase subunit I (162 aa).

4Fe-4S ferredoxin-type domains lie at 53–83 (LRRY…IESE) and 93–122 (TRYD…ETRV). [4Fe-4S] cluster-binding residues include cysteine 63, cysteine 66, cysteine 69, cysteine 73, cysteine 102, cysteine 105, cysteine 108, and cysteine 112.

This sequence belongs to the complex I 23 kDa subunit family. As to quaternary structure, NDH-1 is composed of 14 different subunits. Subunits NuoA, H, J, K, L, M, N constitute the membrane sector of the complex. The cofactor is [4Fe-4S] cluster.

It is found in the cell inner membrane. It catalyses the reaction a quinone + NADH + 5 H(+)(in) = a quinol + NAD(+) + 4 H(+)(out). In terms of biological role, NDH-1 shuttles electrons from NADH, via FMN and iron-sulfur (Fe-S) centers, to quinones in the respiratory chain. The immediate electron acceptor for the enzyme in this species is believed to be ubiquinone. Couples the redox reaction to proton translocation (for every two electrons transferred, four hydrogen ions are translocated across the cytoplasmic membrane), and thus conserves the redox energy in a proton gradient. This chain is NADH-quinone oxidoreductase subunit I, found in Nitrosomonas eutropha (strain DSM 101675 / C91 / Nm57).